A 331-amino-acid chain; its full sequence is NADH-quinone oxidoreductase subunit H (331 aa).

The next 8 membrane-spanning stretches (helical) occupy residues 7-27 (ALVT…AVVI), 81-101 (MIFT…FAIV), 114-134 (IGIL…LFAG), 154-174 (ISYE…VGSF), 187-207 (VWFI…GVAV), 238-258 (FFVG…TLFF), 271-291 (WLSF…FILI), and 310-330 (VCLP…LAAA).

It belongs to the complex I subunit 1 family. NDH-1 is composed of 13 different subunits. Subunits NuoA, H, J, K, L, M, N constitute the membrane sector of the complex.

Its subcellular location is the cell inner membrane. The enzyme catalyses a quinone + NADH + 5 H(+)(in) = a quinol + NAD(+) + 4 H(+)(out). In terms of biological role, NDH-1 shuttles electrons from NADH, via FMN and iron-sulfur (Fe-S) centers, to quinones in the respiratory chain. The immediate electron acceptor for the enzyme in this species is believed to be ubiquinone. Couples the redox reaction to proton translocation (for every two electrons transferred, four hydrogen ions are translocated across the cytoplasmic membrane), and thus conserves the redox energy in a proton gradient. This subunit may bind ubiquinone. The polypeptide is NADH-quinone oxidoreductase subunit H (Pseudomonas paraeruginosa (strain DSM 24068 / PA7) (Pseudomonas aeruginosa (strain PA7))).